Reading from the N-terminus, the 264-residue chain is Hydroxyethylthiazole kinase (264 aa).

Met47 contacts substrate. The ATP site is built by Arg123 and Ser169. Gly196 contributes to the substrate binding site.

This sequence belongs to the Thz kinase family. The cofactor is Mg(2+).

The catalysed reaction is 5-(2-hydroxyethyl)-4-methylthiazole + ATP = 4-methyl-5-(2-phosphooxyethyl)-thiazole + ADP + H(+). It participates in cofactor biosynthesis; thiamine diphosphate biosynthesis; 4-methyl-5-(2-phosphoethyl)-thiazole from 5-(2-hydroxyethyl)-4-methylthiazole: step 1/1. Catalyzes the phosphorylation of the hydroxyl group of 4-methyl-5-beta-hydroxyethylthiazole (THZ). This chain is Hydroxyethylthiazole kinase, found in Brachyspira hyodysenteriae (strain ATCC 49526 / WA1).